Here is a 290-residue protein sequence, read N- to C-terminus: Serpentine receptor class U-26 (290 aa).

7 helical membrane passes run 31–51 (LPMLFLLVPILYIPITIIIIL), 70–90 (LLSAISISQCMCLLFFLADFL), 112–134 (FITILTIFTYHINYSTMIFPFLV), 158–178 (FSIPFICVYPIIFTFFMFPAI), 185–205 (AYPFPFGAIIFRIERTFFGLV), 213–233 (NTLFWMTCCIITNFILLLLLI), and 262–282 (MIFSYLSNAMIVFLLLELHIV).

Belongs to the nematode receptor-like protein sru family.

It localises to the membrane. The polypeptide is Serpentine receptor class U-26 (sru-26) (Caenorhabditis elegans).